Consider the following 126-residue polypeptide: uncharacterized protein (126 aa).

A helical transmembrane segment spans residues 5–25 (LIQHITSIFVFSFFFLFFFFS).

The protein localises to the membrane. This is an uncharacterized protein from Saccharomyces cerevisiae (strain ATCC 204508 / S288c) (Baker's yeast).